Here is a 79-residue protein sequence, read N- to C-terminus: Moronecidin (79 aa).

The first 22 residues, 1 to 22 (MKCATLFLVLSMVVLMAEPGDA), serve as a signal peptide directing secretion. G44 bears the Glycine amide mark. The tract at residues 45-79 (GKAEQDQQDQQYQQEQQEQQAQQYQRFNRERAAFD) is disordered. A propeptide spanning residues 47 to 79 (AEQDQQDQQYQQEQQEQQAQQYQRFNRERAAFD) is cleaved from the precursor. A compositionally biased stretch (low complexity) spans 52–69 (QDQQYQQEQQEQQAQQYQ).

As to expression, expressed in mast cells in gill, skin and gut, and in lining blood vessels in the viscera. Also in intestine, spleen, anterior kidney, and blood cells.

Its subcellular location is the secreted. Its function is as follows. Antimicrobial peptide with broad-spectrum activity against Gram-positive and Gram-negative bacteria as well as against a variety of fungi. Rapidly inactivates channel catfish herpesvirus (ED(50)=4 uM) and frog virus 3 (ED(50)=13 uM) over a wide temperature range. Seems to disrupt the membranes by adopting an alpha helical conformation and forming toroidal pores. Has hemolytic activity. This Morone saxatilis (Striped bass) protein is Moronecidin.